Here is a 130-residue protein sequence, read N- to C-terminus: Small ribosomal subunit protein uS8 (130 aa).

The protein belongs to the universal ribosomal protein uS8 family. Part of the 30S ribosomal subunit.

In terms of biological role, one of the primary rRNA binding proteins, it binds directly to 16S rRNA central domain where it helps coordinate assembly of the platform of the 30S subunit. The chain is Small ribosomal subunit protein uS8 from Methanotorris igneus (Methanococcus igneus).